Here is a 415-residue protein sequence, read N- to C-terminus: Packaging protein 3 (415 aa).

2 disordered regions span residues 1–56 (MHPV…RRRA) and 66–85 (EGLA…VQLK). An interaction with packaging protein 1 region spans residues 1–173 (MHPVLRQMRP…VNQEINFQKS (173 aa)). Low complexity predominate over residues 31–46 (PTASGGATSAADAAAD). S75 carries the phosphoserine; by host modification. The span at 76 to 85 (PERHPRVQLK) shows a compositional bias: basic and acidic residues. S360 carries the post-translational modification Phosphoserine; by host. Positions 381–394 (GAGPGLAVAPARAG) are enriched in low complexity. A disordered region spans residues 381–415 (GAGPGLAVAPARAGNVGGVEEYDEDDEYEPEDGEY). Acidic residues predominate over residues 400 to 415 (EEYDEDDEYEPEDGEY).

This sequence belongs to the adenoviridae packaging protein 3 family. As to quaternary structure, part of the genome packaging complex composed of packaging proteins 1, 2 and 3; this complex specifically binds to the packaging sequence on the left end of viral genomic DNA and performs packaging of the viral genome. Interacts with hexon-linking protein IIIa; this interaction is required to promote correct genome packaging. Post-translationally, cleaved at different sites by the viral protease during virion maturation.

It is found in the host nucleus. In terms of biological role, involved in viral genome packaging through its interaction with packaging proteins 1 and 2. After proteolytic cleavage by adenovirus protease, L1 52/55k protein is removed from the capsid during viral maturation. This is Packaging protein 3 from Human adenovirus C serotype 2 (HAdV-2).